We begin with the raw amino-acid sequence, 282 residues long: Undecaprenyl-diphosphatase (282 aa).

6 consecutive transmembrane segments (helical) span residues 90-110 (YRLG…GLLF), 121-141 (LWVV…AEYL), 165-185 (LALV…LFLG), 194-214 (FGFL…LPDA), 228-248 (QLLV…SWFL), and 256-276 (MYWF…LLAT).

It belongs to the UppP family.

The protein resides in the cell membrane. The enzyme catalyses di-trans,octa-cis-undecaprenyl diphosphate + H2O = di-trans,octa-cis-undecaprenyl phosphate + phosphate + H(+). Functionally, catalyzes the dephosphorylation of undecaprenyl diphosphate (UPP). Confers resistance to bacitracin. The polypeptide is Undecaprenyl-diphosphatase (Mycobacterium marinum (strain ATCC BAA-535 / M)).